We begin with the raw amino-acid sequence, 246 residues long: Carboxy-S-adenosyl-L-methionine synthase (246 aa).

S-adenosyl-L-methionine is bound by residues Y39, 64–66, 89–90, 117–118, N132, and R199; these read GCS, DN, and DI.

Belongs to the class I-like SAM-binding methyltransferase superfamily. Cx-SAM synthase family. In terms of assembly, homodimer.

It catalyses the reaction prephenate + S-adenosyl-L-methionine = carboxy-S-adenosyl-L-methionine + 3-phenylpyruvate + H2O. In terms of biological role, catalyzes the conversion of S-adenosyl-L-methionine (SAM) to carboxy-S-adenosyl-L-methionine (Cx-SAM). The chain is Carboxy-S-adenosyl-L-methionine synthase from Enterobacter sp. (strain 638).